We begin with the raw amino-acid sequence, 187 residues long: Flavin prenyltransferase UbiX (187 aa).

Residues 9–11, T34, 88–91, and R123 contribute to the FMN site; these read GSS and SISS. Dimethylallyl phosphate contacts are provided by Y153 and K169.

This sequence belongs to the UbiX/PAD1 family.

The catalysed reaction is dimethylallyl phosphate + FMNH2 = prenylated FMNH2 + phosphate. In terms of biological role, flavin prenyltransferase that catalyzes the synthesis of the prenylated FMN cofactor (prenyl-FMN) for 4-hydroxy-3-polyprenylbenzoic acid decarboxylase UbiD. The prenyltransferase is metal-independent and links a dimethylallyl moiety from dimethylallyl monophosphate (DMAP) to the flavin N5 and C6 atoms of FMN. The sequence is that of Flavin prenyltransferase UbiX from Campylobacter jejuni subsp. jejuni serotype O:2 (strain ATCC 700819 / NCTC 11168).